A 322-amino-acid chain; its full sequence is Eukaryotic translation initiation factor 3 subunit I (322 aa).

WD repeat units follow at residues 4–43, 46–85, 141–180, 184–223, and 281–322; these read GHER…RLGT, GHQG…VIAS, MVES…KVVD, DHTA…CLKT, and GHFG…NIFE.

Belongs to the eIF-3 subunit I family. Component of the eukaryotic translation initiation factor 3 (eIF-3) complex. The eIF-3 complex interacts with pix.

The protein localises to the cytoplasm. Component of the eukaryotic translation initiation factor 3 (eIF-3) complex, which is involved in protein synthesis of a specialized repertoire of mRNAs and, together with other initiation factors, stimulates binding of mRNA and methionyl-tRNAi to the 40S ribosome. The eIF-3 complex specifically targets and initiates translation of a subset of mRNAs involved in cell proliferation. This Drosophila mojavensis (Fruit fly) protein is Eukaryotic translation initiation factor 3 subunit I.